Consider the following 256-residue polypeptide: UPF0246 protein SPO0106 (256 aa).

It belongs to the UPF0246 family.

The chain is UPF0246 protein SPO0106 from Ruegeria pomeroyi (strain ATCC 700808 / DSM 15171 / DSS-3) (Silicibacter pomeroyi).